The following is a 429-amino-acid chain: Chaperone SurA (429 aa).

The first 19 residues, 1-19 (MKKTLLALLIASVMQSALA), serve as a signal peptide directing secretion. PpiC domains are found at residues 172-273 (RTEY…KLVD) and 283-381 (VEQY…LVEG).

The protein localises to the periplasm. It catalyses the reaction [protein]-peptidylproline (omega=180) = [protein]-peptidylproline (omega=0). In terms of biological role, chaperone involved in the correct folding and assembly of outer membrane proteins. Recognizes specific patterns of aromatic residues and the orientation of their side chains, which are found more frequently in integral outer membrane proteins. May act in both early periplasmic and late outer membrane-associated steps of protein maturation. In Chromobacterium violaceum (strain ATCC 12472 / DSM 30191 / JCM 1249 / CCUG 213 / NBRC 12614 / NCIMB 9131 / NCTC 9757 / MK), this protein is Chaperone SurA.